A 343-amino-acid polypeptide reads, in one-letter code: MMISDLPEDMVEEILSRVSIISLGALRWNDLSKARVICKAEARQQFAGFMIKGSKVCSMRFDLHGIQNNNVEVVEPSIKQIAKFNHVEISQVFHCDGLLLMMSKEVSNTRLVVWNPYLGKIWSIQHRSAYHSENRYTLGYDNNRKPQNLEVAYHSIKGITYLFNGGEKIGEGPTGCLLCFDFTRERFGPSLPLPFHVAHLYTEQLAVLLHNWGAFAMEIWVTTNIEPNAVLMEQLLKNYLLYTSDFIGSFFIDQEKKHAVIFDSSLSCGSVACIIGETGNLRTVDLGVAAVPYRQLPVCSYAPSLEQINQGQELPLIGLTQIFMEQHKYWVSTFLDNLITKYG.

In terms of domain architecture, F-box spans 1–46; it reads MMISDLPEDMVEEILSRVSIISLGALRWNDLSKARVICKAEARQQF.

This Arabidopsis thaliana (Mouse-ear cress) protein is Probable F-box protein At1g67455.